A 172-amino-acid chain; its full sequence is Diphosphoinositol polyphosphate phosphohydrolase 1 (172 aa).

The residue at position 1 (Met1) is an N-acetylmethionine. Substrate-binding positions include Arg10, Lys18–Arg20, and Ser39–Arg41. The Nudix hydrolase domain maps to Tyr17–Thr142. Residues Gly50 and Glu66 each contribute to the Mg(2+) site. A Nudix box motif is present at residues Gly51 to Gly72. Residue Glu69 is the Proton acceptor of the active site. Glu70 is a Mg(2+) binding site. Substrate-binding positions include Arg89 to His91, Arg115, and Lys133.

The protein belongs to the Nudix hydrolase family. DIPP subfamily. In terms of assembly, monomer. Mg(2+) is required as a cofactor. Requires Mn(2+) as cofactor. The cofactor is Zn(2+). Widely expressed. Expressed at higher level in brain, heart, pancreas and liver. Also expressed in placenta, lung and kidney.

Its subcellular location is the cytoplasm. The protein localises to the nucleus. It carries out the reaction diphospho-myo-inositol polyphosphate + H2O = myo-inositol polyphosphate + phosphate.. The catalysed reaction is 5-diphospho-1D-myo-inositol 1,2,3,4,6-pentakisphosphate + H2O = 1D-myo-inositol hexakisphosphate + phosphate + H(+). It catalyses the reaction 3,5-bis(diphospho)-1D-myo-inositol 1,2,4,6-tetrakisphosphate + H2O = 3-diphospho-1D-myo-inositol 1,2,4,5,6-pentakisphosphate + phosphate + 2 H(+). The enzyme catalyses [phosphate](n+1) + n H2O = (n+1) phosphate + n H(+). It carries out the reaction P(1),P(5)-bis(5'-adenosyl) pentaphosphate + H2O = ADP + ATP + 2 H(+). The catalysed reaction is P(1),P(6)-bis(5'-adenosyl) hexaphosphate + H2O = 2 ATP + 2 H(+). It catalyses the reaction P(1),P(4)-bis(5'-adenosyl) tetraphosphate + H2O = AMP + ATP + 2 H(+). The enzyme catalyses a 5'-end (N(7)-methyl 5'-triphosphoguanosine)-ribonucleoside in mRNA + H2O = N(7)-methyl-GMP + a 5'-end diphospho-ribonucleoside in mRNA + 2 H(+). It carries out the reaction a 5'-end (N(7)-methyl 5'-triphosphoguanosine)-ribonucleoside in mRNA + H2O = N(7)-methyl-GDP + a 5'-end phospho-ribonucleoside in mRNA + 2 H(+). With respect to regulation, endopolyphospahatase activity is inhibited by NaF, NaPPi, beta-glycerol phosphate and heparin. 5-diphosphoinositol pentakisphosphate (5-InsP7) inhibits its mRNA decapping activity. Cleaves a beta-phosphate from the diphosphate groups in PP-InsP5 (diphosphoinositol pentakisphosphate) and [PP]2-InsP4 (bisdiphosphoinositol tetrakisphosphate), suggesting that it may play a role in signal transduction. InsP6 (inositol hexakisphosphate) is not a substrate. Acts as a negative regulator of the ERK1/2 pathway. Also able to catalyze the hydrolysis of dinucleoside oligophosphates, with diadenosine 5',5'''-P1,P6-hexaphosphate (Ap6A) and diadenosine 5',5'''- P1,P5-pentaphosphate (Ap5A) being the preferred substrates. The major reaction products are ADP and p4a from Ap6A and ADP and ATP from Ap5A. Also able to hydrolyze 5-phosphoribose 1-diphosphate. Acts as a decapping enzyme that modulates the stability of a subset of mRNAs implicated in cell motility. Hydrolyzes monomethylated capped RNA after both the alpha- and beta-phosphates generating m7GMP + ppRNA and m7GDP + pRNA. Can hydrolyze unmethylated capped RNAs. Divalent cations zinc, magnesium and manganese determine its substrate specificity. Exhibits diphosphoinositol polyphosphate phosphohydrolase in the presence of magnesium ions, diadenosine hexaphosphate hydrolase activity in the presence of manganese ions and endopolyphosphatase activity in the presence of zinc ions. Plays an important role in limiting DNA damage and maintaining cell survival upon oxidative stress via its endopolyphosphatase activity. This is Diphosphoinositol polyphosphate phosphohydrolase 1 from Homo sapiens (Human).